A 487-amino-acid chain; its full sequence is Glutamyl-tRNA(Gln) amidotransferase subunit A (487 aa).

Active-site charge relay system residues include K79 and S154. Catalysis depends on S178, which acts as the Acyl-ester intermediate.

It belongs to the amidase family. GatA subfamily. As to quaternary structure, heterotrimer of A, B and C subunits.

It carries out the reaction L-glutamyl-tRNA(Gln) + L-glutamine + ATP + H2O = L-glutaminyl-tRNA(Gln) + L-glutamate + ADP + phosphate + H(+). Allows the formation of correctly charged Gln-tRNA(Gln) through the transamidation of misacylated Glu-tRNA(Gln) in organisms which lack glutaminyl-tRNA synthetase. The reaction takes place in the presence of glutamine and ATP through an activated gamma-phospho-Glu-tRNA(Gln). The chain is Glutamyl-tRNA(Gln) amidotransferase subunit A from Roseiflexus sp. (strain RS-1).